Reading from the N-terminus, the 84-residue chain is Small ribosomal subunit protein bS16 (84 aa).

Belongs to the bacterial ribosomal protein bS16 family.

This is Small ribosomal subunit protein bS16 from Dechloromonas aromatica (strain RCB).